Reading from the N-terminus, the 231-residue chain is ATP phosphoribosyltransferase (231 aa).

Belongs to the ATP phosphoribosyltransferase family. Short subfamily. Heteromultimer composed of HisG and HisZ subunits.

The protein localises to the cytoplasm. It catalyses the reaction 1-(5-phospho-beta-D-ribosyl)-ATP + diphosphate = 5-phospho-alpha-D-ribose 1-diphosphate + ATP. It participates in amino-acid biosynthesis; L-histidine biosynthesis; L-histidine from 5-phospho-alpha-D-ribose 1-diphosphate: step 1/9. Catalyzes the condensation of ATP and 5-phosphoribose 1-diphosphate to form N'-(5'-phosphoribosyl)-ATP (PR-ATP). Has a crucial role in the pathway because the rate of histidine biosynthesis seems to be controlled primarily by regulation of HisG enzymatic activity. The sequence is that of ATP phosphoribosyltransferase from Brucella melitensis biotype 2 (strain ATCC 23457).